A 502-amino-acid polypeptide reads, in one-letter code: MTEKKYIVALDQGTTSSRAVVMDHDANIISVSQREFEQIYPKPGWVEHDPMEIWATQSSTLVEVLAKADISSDQIAAIGITNQRETTILWEKETGKPIYNAIVWQCRRTAEICEHLKRDGLEDYIRSNTGLVIDPYFSGTKVKWILDHVEGSRERARRGELLFGTVDTWLIWKMTQGRVHVTDYTNASRTMLFNIHTLDWDDKMLEVLDIPREMLPEVRRSSEVYGQTNIGGKGGTRIPISGIAGDQQAALFGQLCVKEGMAKNTYGTGCFMLMNTGEKAVKSENGLLTTIACGPTGEVNYALEGAVFMAGASIQWLRDEMKLINDAYDSEYFATKVQNTNGVYVVPAFTGLGAPYWDPYARGAIFGLTRGVNANHIIRATLESIAYQTRDVLEAMQADSGIRLHALRVDGGAVANNFLMQFQSDILGTRVERPEVREVTALGAAYLAGLAVGFWQNLDELQEKAVIEREFRPGIETTERNYRYAGWKKAVKRAMAWEEHDE.

Residue Thr-14 coordinates ADP. ATP contacts are provided by Thr-14, Thr-15, and Ser-16. Sn-glycerol 3-phosphate is bound at residue Thr-14. Arg-18 is an ADP binding site. Sn-glycerol 3-phosphate is bound by residues Arg-84, Glu-85, Tyr-136, and Asp-246. Glycerol contacts are provided by Arg-84, Glu-85, Tyr-136, Asp-246, and Gln-247. ADP is bound by residues Thr-268 and Gly-311. Residues Thr-268, Gly-311, Gln-315, and Gly-412 each contribute to the ATP site. Gly-412 and Asn-416 together coordinate ADP.

It belongs to the FGGY kinase family. Homotetramer and homodimer (in equilibrium). Heterodimer with EIIA-Glc. Binds 1 zinc ion per glycerol kinase EIIA-Glc dimer. The zinc ion is important for dimerization.

The enzyme catalyses glycerol + ATP = sn-glycerol 3-phosphate + ADP + H(+). It participates in polyol metabolism; glycerol degradation via glycerol kinase pathway; sn-glycerol 3-phosphate from glycerol: step 1/1. Its activity is regulated as follows. Activity of this regulatory enzyme is affected by several metabolites. Allosterically and non-competitively inhibited by fructose 1,6-bisphosphate (FBP) and unphosphorylated phosphocarrier protein EIIA-Glc (III-Glc), an integral component of the bacterial phosphotransferase (PTS) system. Functionally, key enzyme in the regulation of glycerol uptake and metabolism. Catalyzes the phosphorylation of glycerol to yield sn-glycerol 3-phosphate. This chain is Glycerol kinase, found in Escherichia coli O8 (strain IAI1).